A 435-amino-acid chain; its full sequence is U-box domain-containing protein 21 (435 aa).

One can recognise a U-box domain in the interval 30 to 104 (TIPPEFQCPI…QGWCVEKGSP (75 aa)). ARM repeat units follow at residues 202–241 (LEGI…EILS), 245–285 (TRVH…QMVL), 288–327 (PEIA…AICE), and 329–369 (EHGR…KLWK).

The catalysed reaction is S-ubiquitinyl-[E2 ubiquitin-conjugating enzyme]-L-cysteine + [acceptor protein]-L-lysine = [E2 ubiquitin-conjugating enzyme]-L-cysteine + N(6)-ubiquitinyl-[acceptor protein]-L-lysine.. It participates in protein modification; protein ubiquitination. In terms of biological role, functions as an E3 ubiquitin ligase. This Arabidopsis thaliana (Mouse-ear cress) protein is U-box domain-containing protein 21 (PUB21).